Consider the following 79-residue polypeptide: uncharacterized protein (79 aa).

An N-terminal signal peptide occupies residues 1 to 33 (MRFIIRTVMLIALVWIGLLLSGYGVLIGSKENA).

This is an uncharacterized protein from Escherichia coli O157:H7.